Here is a 206-residue protein sequence, read N- to C-terminus: Small ribosomal subunit protein uS4A (206 aa).

The region spanning 98–164 is the S4 RNA-binding domain; it reads MRLDNVVYRL…EKFKTFAENP (67 aa).

It belongs to the universal ribosomal protein uS4 family. In terms of assembly, part of the 30S ribosomal subunit. Contacts protein S5. The interaction surface between S4 and S5 is involved in control of translational fidelity.

In terms of biological role, one of the primary rRNA binding proteins, it binds directly to 16S rRNA where it nucleates assembly of the body of the 30S subunit. With S5 and S12 plays an important role in translational accuracy. The polypeptide is Small ribosomal subunit protein uS4A (Clostridium botulinum (strain ATCC 19397 / Type A)).